The chain runs to 131 residues: Olfactory receptor-like protein COR9 (131 aa).

The Cytoplasmic portion of the chain corresponds to 1-16 (VAICSPLLYSTVMTKR). Residues 17–41 (VCMQLVVGSYMGGLLNSLTHTCGLL) traverse the membrane as a helical segment. Over 42–82 (GLPFCGPNVINHYFCDIPPLLQLACSDTHRNETLLLAFSAV) the chain is Extracellular. Asn-72 carries an N-linked (GlcNAc...) asparagine glycan. A helical membrane pass occupies residues 83 to 103 (IALFTLFVITASYMLILSVIL). The Cytoplasmic segment spans residues 104–116 (KIQSDDGRKKTFH). Residues 117 to 131 (TCASHLTAITIFFGS) form a helical membrane-spanning segment.

Belongs to the G-protein coupled receptor 1 family.

It is found in the cell membrane. In terms of biological role, odorant receptor. The polypeptide is Olfactory receptor-like protein COR9 (COR9) (Gallus gallus (Chicken)).